The chain runs to 728 residues: Catalase-peroxidase (728 aa).

The tryptophyl-tyrosyl-methioninium (Trp-Tyr) (with M-244) cross-link spans 91 to 218 (WHSAGTYRTA…LAAVQMGLIY (128 aa)). The Proton acceptor role is filled by His-92. A cross-link (tryptophyl-tyrosyl-methioninium (Tyr-Met) (with W-91)) is located at residues 218–244 (YVNPEGPDGNPDPVAAARDIRDTFARM). A heme b-binding site is contributed by His-259.

This sequence belongs to the peroxidase family. Peroxidase/catalase subfamily. Homodimer or homotetramer. The cofactor is heme b. In terms of processing, formation of the three residue Trp-Tyr-Met cross-link is important for the catalase, but not the peroxidase activity of the enzyme.

The catalysed reaction is H2O2 + AH2 = A + 2 H2O. It catalyses the reaction 2 H2O2 = O2 + 2 H2O. Bifunctional enzyme with both catalase and broad-spectrum peroxidase activity. This is Catalase-peroxidase from Burkholderia pseudomallei (strain 1710b).